We begin with the raw amino-acid sequence, 201 residues long: Ras-related protein Rab-9A (201 aa).

Residue alanine 2 is modified to N-acetylalanine. Residues glycine 17, valine 18, glycine 19, lysine 20, serine 21, serine 22, serine 34, histidine 38, and threonine 39 each contribute to the GTP site. A Mg(2+)-binding site is contributed by serine 21. The short motif at 31 to 42 is the Switch 1 element; that stretch reads KFDSQLFHTIGV. Serine 34 is subject to Phosphoserine. Mg(2+)-binding residues include threonine 39 and aspartate 62. The short motif at 64 to 78 is the Switch 2 element; the sequence is AGQERFRSLRTPFYR. GTP-binding residues include glycine 65, asparagine 124, lysine 125, aspartate 127, and lysine 156. Serine 179 carries the post-translational modification Phosphoserine. Phosphothreonine is present on threonine 187. 2 S-geranylgeranyl cysteine lipidation sites follow: cysteine 200 and cysteine 201.

It belongs to the small GTPase superfamily. Rab family. In terms of assembly, interacts (preferentially in its GTP-bound form) with GCC2 (via its GRIP domain). Interacts (GTP-bound form) with SGSM1; the GDP-bound form has much lower affinity for SGSM1. Interacts with SGSM2. The GTP-bound form but not the GDP-bound form interacts with HPS4 and the BLOC-3 complex (heterodimer of HPS1 and HPS4) but does not interact with HPS1 alone. Interacts (GTP-bound form) with NDE1; two RAB9A-GTP molecules lie on the opposite sides of the NDE1 homodimer; the interaction leads to RAB9A-dynein motor tethering. Interacts (GTP-bound form) with NDEL1. Requires Mg(2+) as cofactor.

It is found in the cell membrane. The protein resides in the endoplasmic reticulum membrane. The protein localises to the golgi apparatus membrane. Its subcellular location is the late endosome. It localises to the cytoplasmic vesicle. It is found in the phagosome membrane. The protein resides in the phagosome. The protein localises to the cytoplasmic vesicle membrane. Its subcellular location is the melanosome. It catalyses the reaction GTP + H2O = GDP + phosphate + H(+). With respect to regulation, regulated by guanine nucleotide exchange factors (GEFs) which promote the exchange of bound GDP for free GTP. Regulated by GTPase activating proteins (GAPs) which increase the GTP hydrolysis activity. Inhibited by GDP dissociation inhibitors (GDIs). The small GTPases Rab are key regulators of intracellular membrane trafficking, from the formation of transport vesicles to their fusion with membranes. Rabs cycle between an inactive GDP-bound form and an active GTP-bound form that is able to recruit to membranes different sets of downstream effectors directly responsible for vesicle formation, movement, tethering and fusion. RAB9A is involved in the transport of proteins between the endosomes and the trans-Golgi network (TGN). Specifically uses NDE1/NDEL1 as an effector to interact with the dynein motor complex in order to control retrograde trafficking of RAB9-associated late endosomes to the TGN. Involved in the recruitment of SGSM2 to melanosomes and is required for the proper trafficking of melanogenic enzymes TYR, TYRP1 and DCT/TYRP2 to melanosomes in melanocytes. The chain is Ras-related protein Rab-9A from Rattus norvegicus (Rat).